Reading from the N-terminus, the 147-residue chain is Hemoglobin subunit beta-1 (147 aa).

The Globin domain maps to 3 to 147 (KWSKTELTII…VVSALGKQYH (145 aa)). Residues His-64 and His-93 each coordinate heme b.

It belongs to the globin family. Hb1 is a heterotetramer of two alpha chains and two beta-1 chains. As to expression, red blood cells.

Its function is as follows. Involved in oxygen transport from gills to the various peripheral tissues. In Cygnodraco mawsoni (Antarctic dragonfish), this protein is Hemoglobin subunit beta-1 (hbb1).